Reading from the N-terminus, the 552-residue chain is Membrane protein insertase YidC (552 aa).

5 helical membrane passes run 7–24 (VLWV…DNWQ), 364–384 (WGWA…PLSA), 434–454 (LPVV…LASV), 473–493 (PFFI…SLNP), and 508–528 (PIAF…YYVV).

This sequence belongs to the OXA1/ALB3/YidC family. Type 1 subfamily. As to quaternary structure, interacts with the Sec translocase complex via SecD. Specifically interacts with transmembrane segments of nascent integral membrane proteins during membrane integration.

The protein localises to the cell inner membrane. Functionally, required for the insertion and/or proper folding and/or complex formation of integral membrane proteins into the membrane. Involved in integration of membrane proteins that insert both dependently and independently of the Sec translocase complex, as well as at least some lipoproteins. Aids folding of multispanning membrane proteins. This Burkholderia cenocepacia (strain ATCC BAA-245 / DSM 16553 / LMG 16656 / NCTC 13227 / J2315 / CF5610) (Burkholderia cepacia (strain J2315)) protein is Membrane protein insertase YidC.